Here is a 219-residue protein sequence, read N- to C-terminus: 7-cyano-7-deazaguanine synthase (219 aa).

8 to 18 (LSGGMDSAVLL) contacts ATP. Residues Cys-185, Cys-193, Cys-196, and Cys-199 each contribute to the Zn(2+) site.

The protein belongs to the QueC family. It depends on Zn(2+) as a cofactor.

It catalyses the reaction 7-carboxy-7-deazaguanine + NH4(+) + ATP = 7-cyano-7-deazaguanine + ADP + phosphate + H2O + H(+). It participates in purine metabolism; 7-cyano-7-deazaguanine biosynthesis. Functionally, catalyzes the ATP-dependent conversion of 7-carboxy-7-deazaguanine (CDG) to 7-cyano-7-deazaguanine (preQ(0)). This Desulfotalea psychrophila (strain LSv54 / DSM 12343) protein is 7-cyano-7-deazaguanine synthase.